We begin with the raw amino-acid sequence, 397 residues long: Arginine biosynthesis bifunctional protein ArgJ (397 aa).

Substrate is bound by residues Thr-147, Lys-173, Thr-184, Glu-270, Asn-392, and Thr-397. Thr-184 functions as the Nucleophile in the catalytic mechanism.

Belongs to the ArgJ family. Heterotetramer of two alpha and two beta chains.

It is found in the cytoplasm. It carries out the reaction N(2)-acetyl-L-ornithine + L-glutamate = N-acetyl-L-glutamate + L-ornithine. The catalysed reaction is L-glutamate + acetyl-CoA = N-acetyl-L-glutamate + CoA + H(+). The protein operates within amino-acid biosynthesis; L-arginine biosynthesis; L-ornithine and N-acetyl-L-glutamate from L-glutamate and N(2)-acetyl-L-ornithine (cyclic): step 1/1. It functions in the pathway amino-acid biosynthesis; L-arginine biosynthesis; N(2)-acetyl-L-ornithine from L-glutamate: step 1/4. In terms of biological role, catalyzes two activities which are involved in the cyclic version of arginine biosynthesis: the synthesis of N-acetylglutamate from glutamate and acetyl-CoA as the acetyl donor, and of ornithine by transacetylation between N(2)-acetylornithine and glutamate. The protein is Arginine biosynthesis bifunctional protein ArgJ of Staphylococcus epidermidis (strain ATCC 35984 / DSM 28319 / BCRC 17069 / CCUG 31568 / BM 3577 / RP62A).